The following is a 450-amino-acid chain: UDP-N-acetylmuramoylalanine--D-glutamate ligase (450 aa).

Position 119–125 (119–125 (GSNGKTT)) interacts with ATP.

The protein belongs to the MurCDEF family.

The protein resides in the cytoplasm. It carries out the reaction UDP-N-acetyl-alpha-D-muramoyl-L-alanine + D-glutamate + ATP = UDP-N-acetyl-alpha-D-muramoyl-L-alanyl-D-glutamate + ADP + phosphate + H(+). Its pathway is cell wall biogenesis; peptidoglycan biosynthesis. Its function is as follows. Cell wall formation. Catalyzes the addition of glutamate to the nucleotide precursor UDP-N-acetylmuramoyl-L-alanine (UMA). This chain is UDP-N-acetylmuramoylalanine--D-glutamate ligase, found in Streptococcus pneumoniae (strain Taiwan19F-14).